Here is a 421-residue protein sequence, read N- to C-terminus: Testin (421 aa).

The PET domain occupies methionine 92–asparagine 199. 2 disordered regions span residues glutamate 133 to cysteine 164 and lysine 193 to arginine 213. The span at proline 155–cysteine 164 shows a compositional bias: basic and acidic residues. LIM zinc-binding domains follow at residues tyrosine 234–glutamate 297, proline 299–valine 359, and glutamine 362–serine 421.

Belongs to the prickle / espinas / testin family. Interacts via LIM domain 1 with ZYX. Interacts (via LIM domain 3) with ENAH and VASP. Interacts with ALKBH4, talin, actin, alpha-actinin, GRIP1 and PXN. Interacts (via LIM domain 2) with ACTL7A (via N-terminus). Heterodimer with ACTL7A; the heterodimer interacts with ENAH to form a heterotrimer.

The protein resides in the cytoplasm. Its subcellular location is the cell junction. It is found in the focal adhesion. In terms of biological role, scaffold protein that may play a role in cell adhesion, cell spreading and in the reorganization of the actin cytoskeleton. Plays a role in the regulation of cell proliferation. May act as a tumor suppressor. The protein is Testin (TES) of Ovis aries (Sheep).